A 437-amino-acid polypeptide reads, in one-letter code: GTPase Der (437 aa).

EngA-type G domains are found at residues 4 to 167 (PVVA…PDEA) and 176 to 352 (IRFS…DNHR). Residues 10–17 (GRPNVGKS), 57–61 (DTGGI), 119–122 (NKVD), 182–189 (GRPNVGKS), 230–234 (DTAGM), and 295–298 (NKWD) each bind GTP. Residues 353–437 (KRISSSTLND…PIKLIVRARK (85 aa)) enclose the KH-like domain.

It belongs to the TRAFAC class TrmE-Era-EngA-EngB-Septin-like GTPase superfamily. EngA (Der) GTPase family. Associates with the 50S ribosomal subunit.

GTPase that plays an essential role in the late steps of ribosome biogenesis. This Leuconostoc citreum (strain KM20) protein is GTPase Der.